Here is a 223-residue protein sequence, read N- to C-terminus: Thymidine kinase (223 aa).

Residues 19–26 and 96–99 each bind ATP; these read GPMFAGKT and DEVQ. Glu-97 (proton acceptor) is an active-site residue. Residues Cys-153, Cys-156, Cys-191, and His-194 each contribute to the Zn(2+) site.

Belongs to the thymidine kinase family. Homotetramer.

The protein resides in the cytoplasm. It catalyses the reaction thymidine + ATP = dTMP + ADP + H(+). This chain is Thymidine kinase, found in Ureaplasma urealyticum serovar 10 (strain ATCC 33699 / Western).